The primary structure comprises 61 residues: MAQKQIKVTLVRSVIGTKQSHRDTVRGLGLRRINSSRVLVDTPEVRGMIRKVDYLVSVSEA.

Belongs to the universal ribosomal protein uL30 family. In terms of assembly, part of the 50S ribosomal subunit.

This chain is Large ribosomal subunit protein uL30, found in Bordetella petrii (strain ATCC BAA-461 / DSM 12804 / CCUG 43448).